Consider the following 797-residue polypeptide: Probable exo-1,4-beta-xylosidase xlnD (797 aa).

Residues 1–20 (MPGAASIVAVLAALLPTALG) form the signal peptide. N-linked (GlcNAc...) asparagine glycans are attached at residues Asn23, Asn87, Asn142, and Asn237. Asp310 is a catalytic residue. N-linked (GlcNAc...) asparagine glycans are attached at residues Asn326, Asn391, Asn404, Asn442, Asn479, Asn521, Asn617, Asn644, Asn657, Asn684, and Asn706.

It belongs to the glycosyl hydrolase 3 family.

It is found in the secreted. It carries out the reaction Hydrolysis of (1-&gt;4)-beta-D-xylans, to remove successive D-xylose residues from the non-reducing termini.. It functions in the pathway glycan degradation; xylan degradation. Its function is as follows. Xylan 1,4-beta-xylosidase involved in the hydrolysis of xylan, a major structural heterogeneous polysaccharide found in plant biomass representing the second most abundant polysaccharide in the biosphere, after cellulose. The polypeptide is Probable exo-1,4-beta-xylosidase xlnD (xlnD) (Aspergillus flavus (strain ATCC 200026 / FGSC A1120 / IAM 13836 / NRRL 3357 / JCM 12722 / SRRC 167)).